Here is a 662-residue protein sequence, read N- to C-terminus: UvrABC system protein B (662 aa).

The region spanning Glu-25–Arg-412 is the Helicase ATP-binding domain. Gly-38–Thr-45 contacts ATP. The short motif at Tyr-91–Ile-114 is the Beta-hairpin element. One can recognise a Helicase C-terminal domain in the interval Gln-429–Ile-595. Residues Lys-620–Gln-655 form the UVR domain.

It belongs to the UvrB family. As to quaternary structure, forms a heterotetramer with UvrA during the search for lesions. Interacts with UvrC in an incision complex.

The protein resides in the cytoplasm. In terms of biological role, the UvrABC repair system catalyzes the recognition and processing of DNA lesions. A damage recognition complex composed of 2 UvrA and 2 UvrB subunits scans DNA for abnormalities. Upon binding of the UvrA(2)B(2) complex to a putative damaged site, the DNA wraps around one UvrB monomer. DNA wrap is dependent on ATP binding by UvrB and probably causes local melting of the DNA helix, facilitating insertion of UvrB beta-hairpin between the DNA strands. Then UvrB probes one DNA strand for the presence of a lesion. If a lesion is found the UvrA subunits dissociate and the UvrB-DNA preincision complex is formed. This complex is subsequently bound by UvrC and the second UvrB is released. If no lesion is found, the DNA wraps around the other UvrB subunit that will check the other stand for damage. This chain is UvrABC system protein B, found in Caldanaerobacter subterraneus subsp. tengcongensis (strain DSM 15242 / JCM 11007 / NBRC 100824 / MB4) (Thermoanaerobacter tengcongensis).